The sequence spans 322 residues: MKNVFLDFEKGIEEFEAKIEQLRFAQDNSALDISAEITRLQAKSQGLTKSVYAKLTPWQISQVARHPLRPSTLDYIKHLFTDFEELHGDRNFADDRAIVGGLAHFNGQTVMLIGHQKGHDTKEKIYRNFGMPKPEGYRKALRLMRLAEKFSIPLITFVDTPGAYPGIDAEERGQSEAIGKNLYVMAGLRIPIICIIIGEGGSGGALAIAVGDTSLMLQYSVYSVISPEGCASILWKSADKASDAAEILGITADRLKEMALIDTIIPEPVGGAHRDYPAVMQSVRQALQESLRKLQDIPLETLLQKRLDRLLGYGRFKINKPD.

The 264-residue stretch at 30–293 folds into the CoA carboxyltransferase C-terminal domain; that stretch reads ALDISAEITR…RQALQESLRK (264 aa).

The protein belongs to the AccA family. As to quaternary structure, acetyl-CoA carboxylase is a heterohexamer composed of biotin carboxyl carrier protein (AccB), biotin carboxylase (AccC) and two subunits each of ACCase subunit alpha (AccA) and ACCase subunit beta (AccD).

The protein resides in the cytoplasm. The enzyme catalyses N(6)-carboxybiotinyl-L-lysyl-[protein] + acetyl-CoA = N(6)-biotinyl-L-lysyl-[protein] + malonyl-CoA. It participates in lipid metabolism; malonyl-CoA biosynthesis; malonyl-CoA from acetyl-CoA: step 1/1. Functionally, component of the acetyl coenzyme A carboxylase (ACC) complex. First, biotin carboxylase catalyzes the carboxylation of biotin on its carrier protein (BCCP) and then the CO(2) group is transferred by the carboxyltransferase to acetyl-CoA to form malonyl-CoA. This is Acetyl-coenzyme A carboxylase carboxyl transferase subunit alpha from Nitrosomonas eutropha (strain DSM 101675 / C91 / Nm57).